The following is a 654-amino-acid chain: Acetyl-coenzyme A synthetase (654 aa).

Residues 191 to 194 (RRGQ) and T315 each bind CoA. Residues 391 to 393 (GEP), 415 to 420 (DTWWQT), D506, and R521 each bind ATP. S529 is a binding site for CoA. R532 contributes to the ATP binding site. The Mg(2+) site is built by V543, H545, and V548. Position 615 is an N6-acetyllysine (K615).

The protein belongs to the ATP-dependent AMP-binding enzyme family. Requires Mg(2+) as cofactor. Post-translationally, acetylated. Deacetylation by the SIR2-homolog deacetylase activates the enzyme.

The enzyme catalyses acetate + ATP + CoA = acetyl-CoA + AMP + diphosphate. In terms of biological role, catalyzes the conversion of acetate into acetyl-CoA (AcCoA), an essential intermediate at the junction of anabolic and catabolic pathways. AcsA undergoes a two-step reaction. In the first half reaction, AcsA combines acetate with ATP to form acetyl-adenylate (AcAMP) intermediate. In the second half reaction, it can then transfer the acetyl group from AcAMP to the sulfhydryl group of CoA, forming the product AcCoA. The sequence is that of Acetyl-coenzyme A synthetase from Gemmatimonas aurantiaca (strain DSM 14586 / JCM 11422 / NBRC 100505 / T-27).